An 852-amino-acid chain; its full sequence is Protein SBE22 (852 aa).

The tract at residues 1–158 (MTSIQERGTS…ADKSKINTFP (158 aa)) is disordered. The segment covering 15–26 (SLKEGEASDRSS) has biased composition (basic and acidic residues). The span at 43 to 61 (PPSQTTLGRSRAGSNTMNK) shows a compositional bias: polar residues. At Ser72 the chain carries Phosphoserine. Residues 74-96 (NLLSNMNCSDNGNGGNMLNSFVN) are compositionally biased toward polar residues. Residues 124–139 (TTEVFSSTSASSSLGD) are compositionally biased toward low complexity. Ser201 is modified (phosphoserine). The disordered stretch occupies residues 206-248 (AAEKTMNKSRHSYQEQFSSKKSQSSLLNSKQRSRAKSQTCSST). The segment covering 224–235 (SKKSQSSLLNSK) has biased composition (low complexity). 3 positions are modified to phosphoserine: Ser459, Ser517, and Ser520.

It belongs to the SBE2 family.

It localises to the cytoplasm. Its subcellular location is the golgi apparatus. Functionally, with SBE2, is involved in cell wall integrity and polarity processes like bud growth, through the transport of CHS3 and UTR2 to sites of growth. This is Protein SBE22 (SBE22) from Saccharomyces cerevisiae (strain YJM789) (Baker's yeast).